Here is a 274-residue protein sequence, read N- to C-terminus: Bis(5'-nucleosyl)-tetraphosphatase, symmetrical (274 aa).

It belongs to the Ap4A hydrolase family.

The catalysed reaction is P(1),P(4)-bis(5'-adenosyl) tetraphosphate + H2O = 2 ADP + 2 H(+). Hydrolyzes diadenosine 5',5'''-P1,P4-tetraphosphate to yield ADP. The protein is Bis(5'-nucleosyl)-tetraphosphatase, symmetrical of Shewanella sp. (strain W3-18-1).